The following is a 1210-amino-acid chain: MRPSGTAGAALLALLAALCPASRALEEKKVCQGTSNKLTQLGTFEDHFLSLQRMFNNCEVVLGNLEITYVQRNYDLSFLKTIQEVAGYVLIALNTVERIPLENLQIIRGNMYYENSYALAVLSNYDANKTGLKELPMRNLQEILHGAVRFSNNPALCNVESIQWRDIVSSEFLSNMSMDFQNHLGSCQKCDPSCPNGSCWGAGEENCQKLTKIICAQQCSGRCRGKSPSDCCHNQCAAGCTGPRESDCLVCRKFRDEATCKDTCPPLMLYNPTTYQMDVNPEGKYSFGATCVKKCPRNYVVTDHGSCVRACGADSYEMEEDGVRKCKKCEGPCRKVCNGIGIGEFKDTLSINATNIKHFKNCTSISGDLHILPVAFRGDSFTHTPPLDPQELDILKTVKEITGFLLIQAWPENRTDLHAFENLEIIRGRTKQHGQFSLAVVSLNITSLGLRSLKEISDGDVIISGNKNLCYANTINWKKLFGTSSQKTKIISNRGENSCKATGQVCHALCSPEGCWGPEPRDCVSCQNVSRGRECVDKCNVLEGEPREFVENSECIQCHPECLPQVMNITCTGRGPDNCIQCAHYIDGPHCVKTCPAGVMGENNTLVWKYADAGHVCHLCHPNCTYGCTGPGLEGCARNGPKIPSIATGMVGALLLLLVVALGIGLFMRRRHIVRKRTLRRLLQERELVEPLTPSGEAPNQALLRILKETEFKKIKVLGSGAFGTVYKGLWIPEGEKVKIPVAIKELREATSPKANKEILDEAYVMASVDNPHVCRLLGICLTSTVQLITQLMPFGCLLDYVREHKDNIGSQYLLNWCVQIAKGMNYLEDRRLVHRDLAARNVLVKTPQHVKITDFGLAKLLGAEEKEYHAEGGKVPIKWMALESILHRIYTHQSDVWSYGVTVWELMTFGSKPYDGIPASEISSILEKGERLPQPPICTIDVYMIMVKCWMIDADSRPKFRELIIEFSKMARDPQRYLVIQGDERMHLPSPTDSNFYRALMDEEDMDDVVDADEYLIPQQGFFSSPSTSRTPLLSSLSATSNNSTVACIDRNGLQSCPIKEDSFLQRYSSDPTGALTEDSIDDTFLPVPEYINQSVPKRPAGSVQNPVYHNQPLNPAPSRDPHYQDPHSTAVGNPEYLNTVQPTCVNSTFDSPAHWAQKGSHQISLDNPDYQQDFFPKEAKPNGIFKGSTAENAEYLRVAPQSSEFIGA.

The signal sequence occupies residues 1-24 (MRPSGTAGAALLALLAALCPASRA). The Extracellular segment spans residues 25–645 (LEEKKVCQGT…CARNGPKIPS (621 aa)). A disulfide bridge links Cys31 with Cys58. The stretch at 75 to 300 (DLSFLKTIQE…CVKKCPRNYV (226 aa)) is one Approximate repeat. N-linked (GlcNAc...) asparagine glycans are attached at residues Asn128, Asn175, and Asn196. Cystine bridges form between Cys157–Cys187, Cys190–Cys199, Cys194–Cys207, Cys215–Cys223, Cys219–Cys231, Cys232–Cys240, Cys236–Cys248, Cys251–Cys260, Cys264–Cys291, Cys295–Cys307, Cys311–Cys326, Cys329–Cys333, and Cys337–Cys362. Ser229 bears the Phosphoserine mark. Residues Asn352, Asn361, Asn413, and Asn444 are each glycosylated (N-linked (GlcNAc...) asparagine). One copy of the Approximate repeat lies at 390-600 (QELDILKTVK…CVKTCPAGVM (211 aa)). 11 disulfide bridges follow: Cys470–Cys499, Cys506–Cys515, Cys510–Cys523, Cys526–Cys535, Cys539–Cys555, Cys558–Cys571, Cys562–Cys579, Cys582–Cys591, Cys595–Cys617, Cys620–Cys628, and Cys624–Cys636. Asn528 carries N-linked (GlcNAc...) asparagine glycosylation. The N-linked (GlcNAc...) asparagine glycan is linked to Asn568. Asn603 is a glycosylation site (N-linked (GlcNAc...) asparagine). The helical transmembrane segment at 646–668 (IATGMVGALLLLLVVALGIGLFM) threads the bilayer. Residues 669–1210 (RRRHIVRKRT…APQSSEFIGA (542 aa)) lie on the Cytoplasmic side of the membrane. Thr678 carries the post-translational modification Phosphothreonine; by PKC and PKD/PRKD1. Residues 688–704 (LVEPLTPSGEAPNQALL) are important for dimerization, phosphorylation and activation. Thr693 carries the post-translational modification Phosphothreonine; by PKD/PRKD1. Residue Ser695 is modified to Phosphoserine. A Protein kinase domain is found at 712–979 (FKKIKVLGSG…KMARDPQRYL (268 aa)). Lys716 participates in a covalent cross-link: Glycyl lysine isopeptide (Lys-Gly) (interchain with G-Cter in ubiquitin). ATP is bound at residue 718–726 (LGSGAFGTV). Residue Lys737 forms a Glycyl lysine isopeptide (Lys-Gly) (interchain with G-Cter in ubiquitin) linkage. Lys745 is a binding site for ATP. Position 745 is an N6-(2-hydroxyisobutyryl)lysine (Lys745). Glycyl lysine isopeptide (Lys-Gly) (interchain with G-Cter in ubiquitin) cross-links involve residues Lys754 and Lys757. Position 790–791 (790–791 (TQ)) interacts with ATP. Asp837 acts as the Proton acceptor in catalysis. Position 855 (Asp855) interacts with ATP. Lys867 is covalently cross-linked (Glycyl lysine isopeptide (Lys-Gly) (interchain with G-Cter in ubiquitin)). Tyr869 is subject to Phosphotyrosine. Glycyl lysine isopeptide (Lys-Gly) (interchain with G-Cter in ubiquitin) cross-links involve residues Lys929, Lys960, and Lys970. A phosphoserine mark is found at Ser991 and Ser995. Phosphotyrosine; by autocatalysis occurs at positions 998 and 1016. 2 positions are modified to phosphoserine: Ser1026 and Ser1039. At Thr1041 the chain carries Phosphothreonine. Ser1042 carries the post-translational modification Phosphoserine. Residue Cys1049 is the site of S-palmitoyl cysteine attachment. Ser1064 is modified (phosphoserine). Tyr1069 is subject to Phosphotyrosine. A phosphoserine mark is found at Ser1070, Ser1071, and Ser1081. Phosphotyrosine; by autocatalysis is present on residues Tyr1092 and Tyr1110. The interval 1097–1137 (VPKRPAGSVQNPVYHNQPLNPAPSRDPHYQDPHSTAVGNPE) is disordered. Polar residues-rich tracts occupy residues 1104-1115 (SVQNPVYHNQPL) and 1128-1137 (PHSTAVGNPE). The S-palmitoyl cysteine moiety is linked to residue Cys1146. Residue Ser1166 is modified to Phosphoserine. Tyr1172 and Tyr1197 each carry phosphotyrosine; by autocatalysis. The residue at position 1199 (Arg1199) is an Omega-N-methylarginine.

The protein belongs to the protein kinase superfamily. Tyr protein kinase family. EGF receptor subfamily. In terms of assembly, binding of the ligand triggers homo- and/or heterodimerization of the receptor triggering its autophosphorylation. Heterodimer with ERBB2. Forms a complex with CCDC88A/GIV (via SH2-like regions) and GNAI3 which leads to enhanced EGFR signaling and triggering of cell migration; binding to CCDC88A requires autophosphorylation of the EGFR C-terminal region, and ligand stimulation is required for recruitment of GNAI3 to the complex. Interacts with ERRFI1; inhibits dimerization of the kinase domain and autophosphorylation. Part of a complex with ERBB2 and either PIK3C2A or PIK3C2B. Interacts with GRB2; an adapter protein coupling the receptor to downstream signaling pathways. Interacts with GAB2; involved in signaling downstream of EGFR. Interacts with STAT3; mediates EGFR downstream signaling in cell proliferation. Interacts with RIPK1; involved in NF-kappa-B activation. Interacts (autophosphorylated) with CBL, CBLB and CBLC; involved in EGFR ubiquitination and regulation; interaction with CBL is reduced in the presence of tensin TNS4. Interacts with SOCS5; regulates EGFR degradation through ELOC- and ELOB-mediated ubiquitination and proteasomal degradation. Interacts with PRMT5; methylates EGFR and enhances interaction with PTPN6. Interacts (phosphorylated) with PTPN6; inhibits EGFR-dependent activation of MAPK/ERK. Interacts with COPG1; essential for regulation of EGF-dependent nuclear transport of EGFR by retrograde trafficking from the Golgi to the ER. Interacts with TNK2; this interaction is dependent on EGF stimulation and kinase activity of EGFR. Interacts with PCNA; positively regulates PCNA. Interacts with PELP1. Interacts with MUC1. Interacts with AP2M1. Interacts with FER. May interact with EPS8; mediates EPS8 phosphorylation. Interacts (via SH2 domains) with GRB2, NCK1 and NCK2. Interacts with ATXN2. Interacts with GAREM1. Interacts (ubiquitinated) with ANKRD13A/B/D; the interaction is direct and may regulate EGFR internalization after EGF stimulation. Interacts with GPER1; the interaction occurs in an estrogen-dependent manner. Interacts (via C-terminal cytoplasmic kinase domain) with ZPR1 (via zinc fingers). Interacts with RNF115 and RNF126. Interacts with GPRC5A (via its transmembrane domain). Interacts with FAM83B; positively regulates EGFR inducing its autophosphorylation in absence of stimulation by EGF. Interacts with LAPTM4B; positively correlates with EGFR activation. Interacts with STX19. Interacts with CD44. Interacts with PGRMC1; the interaction requires PGRMC1 homodimerization. Interacts with PIKFYVE. Interacts with NEU3. Interacts with TRAF4. Interacts with the ant venom OMEGA-myrmeciitoxin(02)-Mg1a. Interacts with CD82; this interaction facilitates ligand-induced endocytosis of the receptor and its subsequent desensitization. Phosphorylated on Tyr residues in response to EGF. Phosphorylation at Ser-695 is partial and occurs only if Thr-693 is phosphorylated. Phosphorylation at Thr-678 and Thr-693 by PRKD1 inhibits EGF-induced MAPK8/JNK1 activation. Dephosphorylation by PTPRJ prevents endocytosis and stabilizes the receptor at the plasma membrane. Autophosphorylation at Tyr-1197 is stimulated by methylation at Arg-1199 and enhances interaction with PTPN6. Autophosphorylation at Tyr-1092 and/or Tyr-1110 recruits STAT3. Dephosphorylated by PTPN1 and PTPN2. Post-translationally, monoubiquitinated and polyubiquitinated upon EGF stimulation; which does not affect tyrosine kinase activity or signaling capacity but may play a role in lysosomal targeting. Polyubiquitin linkage is mainly through 'Lys-63', but linkage through 'Lys-48', 'Lys-11' and 'Lys-29' also occurs. Deubiquitination by OTUD7B prevents degradation. Ubiquitinated by RNF115 and RNF126. Ubiquitinated by ZNRF1 or CBL at different lysines in response to EGF stimulation; leading to recruitment of the ESCRT machinery and subsequent degradation in the lysosomes. Deubiquitinated by UCHL1 leading to the inhibition of its degradation. In terms of processing, palmitoylated on Cys residues by ZDHHC20. Palmitoylation inhibits internalization after ligand binding, and increases the persistence of tyrosine-phosphorylated EGFR at the cell membrane. Palmitoylation increases the amplitude and duration of EGFR signaling. Methylated. Methylation at Arg-1199 by PRMT5 stimulates phosphorylation at Tyr-1197. As to expression, hypothalamus.

It localises to the cell membrane. It is found in the endoplasmic reticulum membrane. The protein localises to the golgi apparatus membrane. Its subcellular location is the nucleus membrane. The protein resides in the endosome. It localises to the endosome membrane. It is found in the nucleus. The enzyme catalyses L-tyrosyl-[protein] + ATP = O-phospho-L-tyrosyl-[protein] + ADP + H(+). With respect to regulation, endocytosis and inhibition of the activated EGFR by phosphatases like PTPRJ and PTPRK constitute immediate regulatory mechanisms. Upon EGF-binding phosphorylates EPS15 that regulates EGFR endocytosis and activity. Moreover, inducible feedback inhibitors including LRIG1, SOCS4, SOCS5 and ERRFI1 constitute alternative regulatory mechanisms for the EGFR signaling. In terms of biological role, receptor tyrosine kinase binding ligands of the EGF family and activating several signaling cascades to convert extracellular cues into appropriate cellular responses. Known ligands include EGF, TGFA/TGF-alpha, AREG, epigen/EPGN, BTC/betacellulin, epiregulin/EREG and HBEGF/heparin-binding EGF. Ligand binding triggers receptor homo- and/or heterodimerization and autophosphorylation on key cytoplasmic residues. The phosphorylated receptor recruits adapter proteins like GRB2 which in turn activates complex downstream signaling cascades. Activates at least 4 major downstream signaling cascades including the RAS-RAF-MEK-ERK, PI3 kinase-AKT, PLCgamma-PKC and STATs modules. May also activate the NF-kappa-B signaling cascade. Also directly phosphorylates other proteins like RGS16, activating its GTPase activity and probably coupling the EGF receptor signaling to the G protein-coupled receptor signaling. Also phosphorylates MUC1 and increases its interaction with SRC and CTNNB1/beta-catenin. Positively regulates cell migration via interaction with CCDC88A/GIV which retains EGFR at the cell membrane following ligand stimulation, promoting EGFR signaling which triggers cell migration. Plays a role in enhancing learning and memory performance. Plays a role in mammalian pain signaling (long-lasting hypersensitivity). This Macaca mulatta (Rhesus macaque) protein is Epidermal growth factor receptor (EGFR).